Reading from the N-terminus, the 95-residue chain is Small ribosomal subunit protein bS6 (95 aa).

Belongs to the bacterial ribosomal protein bS6 family.

Binds together with bS18 to 16S ribosomal RNA. In Corynebacterium efficiens (strain DSM 44549 / YS-314 / AJ 12310 / JCM 11189 / NBRC 100395), this protein is Small ribosomal subunit protein bS6.